Here is a 160-residue protein sequence, read N- to C-terminus: Photosystem II extrinsic protein V (160 aa).

The first 25 residues, 1 to 25, serve as a signal peptide directing secretion; it reads MKRFILLAIATVFFFCQFQTNPVNA. Cys62, Cys65, His66, and His117 together coordinate heme c.

It belongs to the cytochrome c family. PsbV subfamily. PSII is composed of 1 copy each of membrane proteins PsbA, PsbB, PsbC, PsbD, PsbE, PsbF, PsbH, PsbI, PsbJ, PsbK, PsbL, PsbM, PsbT, PsbX, PsbY, PsbZ, Psb30/Ycf12, peripheral proteins PsbO, CyanoQ (PsbQ), PsbU, PsbV and a large number of cofactors. It forms dimeric complexes. Heme c serves as cofactor.

It localises to the cellular thylakoid membrane. Functionally, one of the extrinsic, lumenal subunits of photosystem II (PSII). PSII is a light-driven water plastoquinone oxidoreductase, using light energy to abstract electrons from H(2)O, generating a proton gradient subsequently used for ATP formation. The extrinsic proteins stabilize the structure of photosystem II oxygen-evolving complex (OEC), the ion environment of oxygen evolution and protect the OEC against heat-induced inactivation. Low-potential cytochrome c that plays a role in the OEC of PSII. The chain is Photosystem II extrinsic protein V from Rippkaea orientalis (strain PCC 8801 / RF-1) (Cyanothece sp. (strain PCC 8801)).